We begin with the raw amino-acid sequence, 21 residues long: GMASKAGTIVGKIAKVALNAL.

Leucine 21 is subject to Leucine amide.

As to expression, expressed by the skin glands.

The protein resides in the secreted. In terms of biological role, antimicrobial peptide. The polypeptide is Peptide PGLa-R3 (Xenopus ruwenzoriensis (Uganda clawed frog)).